The following is a 286-amino-acid chain: Polyamine aminopropyltransferase (286 aa).

The PABS domain occupies 5-238 (KTWHEKLYCH…GVMVFAWGTN (234 aa)). The spermidine site is built by histidine 64 and aspartate 88. S-methyl-5'-thioadenosine-binding positions include glutamate 108 and 140-141 (DG). Aspartate 158 (proton acceptor) is an active-site residue. Spermidine is bound at residue 158-161 (DSTD).

This sequence belongs to the spermidine/spermine synthase family. As to quaternary structure, homodimer or homotetramer.

Its subcellular location is the cytoplasm. It carries out the reaction S-adenosyl 3-(methylsulfanyl)propylamine + putrescine = S-methyl-5'-thioadenosine + spermidine + H(+). It participates in amine and polyamine biosynthesis; spermidine biosynthesis; spermidine from putrescine: step 1/1. Its function is as follows. Catalyzes the irreversible transfer of a propylamine group from the amino donor S-adenosylmethioninamine (decarboxy-AdoMet) to putrescine (1,4-diaminobutane) to yield spermidine. This Buchnera aphidicola subsp. Acyrthosiphon pisum (strain 5A) protein is Polyamine aminopropyltransferase.